Consider the following 122-residue polypeptide: Large ribosomal subunit protein uL14 (122 aa).

Belongs to the universal ribosomal protein uL14 family. As to quaternary structure, part of the 50S ribosomal subunit. Forms a cluster with proteins L3 and L19. In the 70S ribosome, L14 and L19 interact and together make contacts with the 16S rRNA in bridges B5 and B8.

Binds to 23S rRNA. Forms part of two intersubunit bridges in the 70S ribosome. The sequence is that of Large ribosomal subunit protein uL14 from Anaeromyxobacter sp. (strain Fw109-5).